Consider the following 317-residue polypeptide: MGESKRTEKTRVLVVGATGYIGKRIVRACLAEGHETYVLQRPEIGLEIEKVQLFLSFKKLGARIVEGSFSDHQSLVSAVKLVDVVVSAMSGVHFRSHNILVQLKLVEAIKEAGNVKRFLPSEFGMDPPRMGHALPPGRETFDQKMEVRQAIEAAGIPYTYVVGACFAAYFAGNLSQMVTLLPPKEKVNIYGDGNVKVVFADEDDIAKYTAKTLNDPRTLNKTVNIRPPDNVLTQLELVQIWEKLTGKELEKTNIAAQDFLANIEQMEIPHQAGIGHFYHIFYEGCLTDHEVGEDEEASSLYPDVKYKRMDDYLRMFL.

NADP(+) is bound by residues Thr18, Tyr20, Ile21, Arg41, Lys50, Ser90, Gly91, Arg95, Asn98, Ser121, and Glu122. Residue Met125 coordinates (-)-pinoresinol. Lys144 and Phe166 together coordinate NADP(+). Residue Lys144 is the Proton acceptor of the active site. The (-)-pinoresinol site is built by Met177 and Val178.

The protein belongs to the NmrA-type oxidoreductase family. Isoflavone reductase subfamily. In terms of assembly, forms homodimers. In terms of tissue distribution, expressed in roots and stems.

The catalysed reaction is (-)-lariciresinol + NADP(+) = (-)-pinoresinol + NADPH + H(+). The enzyme catalyses (+)-lariciresinol + NADP(+) = (+)-pinoresinol + NADPH + H(+). Reductase involved in lignan biosynthesis. Involved in secondary cell wall biosynthesis in fiber cells. Unlike conventional pinoresinol reductases that can reduce both pinoresinol and lariciresinol, PRR1 shows a strict substrate preference toward pinoresinol. Active on both (+) and (-)-pinoresinol. Abstracts the 4R-hydride from the NADPH cofactor during catalysis. This is Pinoresinol reductase 1 from Arabidopsis thaliana (Mouse-ear cress).